The sequence spans 526 residues: MLRRKVSTLLMTALITTSFLNSKPVYANPVTKSKDNNLKEVQQVTSKSNKNKNQKVTIMYYCDADNNLEGSLLNDIEEMKTGYKDSPNLNLIALVDRSPRYSSDEKVLGEDFSDTRLYKIEHNKANRLDGKNEFPEISTTSKYEANMGDPEVLKKFIDYCKSNYEADKYVLIMANHGGGAREKSNPRLNRAICWDDSNLDKNGEADCLYMGEISDHLTEKQSVDLLAFDACLMGTAEVAYQYRPGNGGFSADTLVASSPVVWGPGFKYDKIFDRIKAGGGTNNEDDLTLGGKEQNFDPATITNEQLGALFVEEQRDSTHANGRYDQHLSFYDLKKAESVKRAIDNLAVNLSNENKKSEIEKLRGSGIHTDLMHYFDEYSEGEWVEYPYFDVYDLCEKINKSENFSSKTKDLASNAMNKLNEMIVYSFGDPSNNFKEGKNGLSIFLPNGDKKYSTYYTSTKIPHWTMQSWYNSIDTVKYGLNPYGKLSWCKDGQDPEINKVGNWFELLDSWFDKTNDVTGGVNHYQW.

The N-terminal stretch at 1-27 (MLRRKVSTLLMTALITTSFLNSKPVYA) is a signal peptide. A propeptide spanning residues 28-50 (NPVTKSKDNNLKEVQQVTSKSNK) is cleaved from the precursor. Positions 182–190 (EKSNPRLNR) are cleaved as a propeptide — linker. Residue cysteine 231 is the Nucleophile of the active site.

It belongs to the peptidase C11 family. As to quaternary structure, heterodimer of a light chain and a heavy chain held together by strong non-covalent forces rather than by intramolecular disulfide bridges.

The catalysed reaction is Preferential cleavage: Arg-|-Xaa, including Arg-|-Pro bond, but not Lys-|-Xaa.. Functionally, cysteine endopeptidase with strict specificity. The polypeptide is Clostripain (cloSI) (Hathewaya histolytica (Clostridium histolyticum)).